A 676-amino-acid polypeptide reads, in one-letter code: Ion-translocating oxidoreductase complex subunit C (676 aa).

2 consecutive 4Fe-4S ferredoxin-type domains span residues 369-397 (GEPQEEQNCIRCSACADACPADLLPQQLY) and 407-436 (KATTHNIADCIECGACAWVCPSNIPLVQYF). The [4Fe-4S] cluster site is built by cysteine 377, cysteine 380, cysteine 383, cysteine 387, cysteine 416, cysteine 419, cysteine 422, and cysteine 426. The segment at 600–652 (ARKLEQQQANAEPEQQVDPRKAAVEAAIARAKARKLEQQQANAEPEEQVDPRK) is disordered. The segment covering 605–615 (QQQANAEPEQQ) has biased composition (low complexity).

The protein belongs to the 4Fe4S bacterial-type ferredoxin family. RnfC subfamily. The complex is composed of six subunits: RsxA, RsxB, RsxC, RsxD, RsxE and RsxG. [4Fe-4S] cluster is required as a cofactor.

The protein localises to the cell inner membrane. In terms of biological role, part of a membrane-bound complex that couples electron transfer with translocation of ions across the membrane. Required to maintain the reduced state of SoxR. This is Ion-translocating oxidoreductase complex subunit C from Escherichia coli (strain SMS-3-5 / SECEC).